Consider the following 197-residue polypeptide: Peptidyl-tRNA hydrolase (197 aa).

A tRNA-binding site is contributed by Y18. H23 serves as the catalytic Proton acceptor. The tRNA site is built by F69, N71, and N117.

The protein belongs to the PTH family. As to quaternary structure, monomer.

It is found in the cytoplasm. The enzyme catalyses an N-acyl-L-alpha-aminoacyl-tRNA + H2O = an N-acyl-L-amino acid + a tRNA + H(+). In terms of biological role, hydrolyzes ribosome-free peptidyl-tRNAs (with 1 or more amino acids incorporated), which drop off the ribosome during protein synthesis, or as a result of ribosome stalling. Catalyzes the release of premature peptidyl moieties from peptidyl-tRNA molecules trapped in stalled 50S ribosomal subunits, and thus maintains levels of free tRNAs and 50S ribosomes. The protein is Peptidyl-tRNA hydrolase of Psychromonas ingrahamii (strain DSM 17664 / CCUG 51855 / 37).